The sequence spans 164 residues: UPF0178 protein RPB_3201 (164 aa).

It belongs to the UPF0178 family.

This is UPF0178 protein RPB_3201 from Rhodopseudomonas palustris (strain HaA2).